The following is a 902-amino-acid chain: Protein translocase subunit SecA (902 aa).

ATP-binding positions include Q89, 107–111 (GEGKT), and D502. 4 residues coordinate Zn(2+): C884, C886, C895, and H896.

It belongs to the SecA family. Monomer and homodimer. Part of the essential Sec protein translocation apparatus which comprises SecA, SecYEG and auxiliary proteins SecDF-YajC and YidC. It depends on Zn(2+) as a cofactor.

The protein resides in the cell inner membrane. The protein localises to the cytoplasm. It carries out the reaction ATP + H2O + cellular proteinSide 1 = ADP + phosphate + cellular proteinSide 2.. Functionally, part of the Sec protein translocase complex. Interacts with the SecYEG preprotein conducting channel. Has a central role in coupling the hydrolysis of ATP to the transfer of proteins into and across the cell membrane, serving both as a receptor for the preprotein-SecB complex and as an ATP-driven molecular motor driving the stepwise translocation of polypeptide chains across the membrane. The chain is Protein translocase subunit SecA from Agrobacterium fabrum (strain C58 / ATCC 33970) (Agrobacterium tumefaciens (strain C58)).